Reading from the N-terminus, the 899-residue chain is MSVKPLTELTKNLEAASNELLKTKVLMDMELNYLSIEQLESAQNITDFLNILKQTSSQYSTFIHQHFLFYLLKLSTFSTLNYDLESIKQYMNILNNVCDVATTIHATSSSNFLNNQTVINHIKQYITSNATFTGLSEPIVPNNVISTFRCVEEVVHVCFQCYWHFPFQAQIPQIPNGALEKWLLTQHFKFLNLDYTAFNSLKDQATYLITHEKHLFVPLSSSEYSLTLPLAKNQALNIYTSFTTNTITKSNVPVLAFSAKELTDATPELFFLYDFIIEALYHEHSYNVPQNIIEQFISKNTQFMTDLCNTIQIKCSNKSLTSSEIRHIKELLESCGLTEECCHRLQTSVLISNVSFTSNSWKGYETFISLISQLVLFSDFFYKCLFYFSPTSIGHSKITEILNTVSAIESETLSHANKFSWKLANMLSFFIPKAPSKIILETYTHISPYLMKSAFSIWAKKTWNYTWLDATSPHPTQTHTFKHAPVISQSEVQKYCENLQLGTTEYDSRIVNSHLFAEEFITHHIIPTLTAILQNKVQKNRALFQLRWLIVFASDEAKGLYRIRRPLGLLYFQIIEIFHDSNAAAAAILNVLDYLNEIQQLIQYYVPTYTTPIKFIQELFSIKYKPQSTELSKSIQKFIAETETCVKDILPFIQLGTNMCNTTYYHIENTYNINIQGQSPARLDTKALTHAIKAIQGLTKESWTTISQSYKELQTAYIQLATILETIEKISQHSIAIKVSNPNFIKLNNTFLQCFKKYNTIANLITNSHSFNLTRYFRQIFEPELIPITTVQKILNFNDETDDPQPFLDSLSQPLYSHTNAPKKSELTSEDFNRLLEFANPVFETAPSSIKLHYSDTFNTPQVNINWKTYEHTTYIADSPAELQFTHLTSAILDAELSK.

The tract at residues 463–899 (WNYTWLDATS…SAILDAELSK (437 aa)) is interaction with large tegument protein.

This sequence belongs to the herpesviridae inner tegument protein family. As to quaternary structure, interacts (via C-terminus) with the large tegument protein/LTP (via N-terminus).

It is found in the virion tegument. The protein localises to the host cytoplasm. Its subcellular location is the host nucleus. The protein resides in the host Golgi apparatus. It localises to the host trans-Golgi network. Functionally, plays an essential role in cytoplasmic secondary envelopment during viral egress. Interacts with the capsid via the large tegument protein/LTP and participates in its transport to the host trans-Golgi network (TGN) where secondary envelopment occurs. Modulates tegumentation and capsid accumulation at the viral assembly complex. This is Inner tegument protein (63) from Saimiri sciureus (Common squirrel monkey).